An 818-amino-acid polypeptide reads, in one-letter code: BDNF/NT-3 growth factors receptor (818 aa).

Residues 1-31 (MVSWRRRPGPGLARLWGLCCLVLGCWRGALG) form the signal peptide. 2 disulfides stabilise this stretch: Cys32–Cys38 and Cys36–Cys45. Topologically, residues 32-426 (CPASCRCSSW…DVSNKENEDS (395 aa)) are extracellular. The N-linked (GlcNAc...) asparagine glycan is linked to Asn66. The LRR 1 repeat unit spans residues 71–92 (YIANQRKLESINDNEVGFYVGL). A glycan (N-linked (GlcNAc...) asparagine) is linked at Asn94. The stretch at 95 to 116 (LTVVDSGLRFVSRQAFVKNINL) is one LRR 2 repeat. Asn120 is a glycosylation site (N-linked (GlcNAc...) asparagine). 2 cysteine pairs are disulfide-bonded: Cys151/Cys175 and Cys153/Cys193. The region spanning 196–281 (PSANLSNYNI…GEVQTSAELT (86 aa)) is the Ig-like C2-type 1 domain. N-linked (GlcNAc...) asparagine glycosylation is found at Asn199, Asn204, Asn226, Asn253, Asn287, Asn324, and Asn337. Cysteines 217 and 265 form a disulfide. The region spanning 295–364 (TPDHHWCIPF…NGAYTLLAKN (70 aa)) is the Ig-like C2-type 2 domain. Cys301 and Cys344 are disulfide-bonded. The tract at residues 384–394 (GSGPIVDPDVY) is provides specificity for BDNF as ligand versus NTF3 and NTF4. Residues 400 to 418 (PNDLGDTTNNSNQITSPDV) show a composition bias toward polar residues. The tract at residues 400–420 (PNDLGDTTNNSNQITSPDVSN) is disordered. Asn408 is a glycosylation site (N-linked (GlcNAc...) asparagine). A helical membrane pass occupies residues 427–450 (ITVYVVVGIAALVCTGLVIMLIIL). Residues 451–818 (KFGRHSKFGM…ASPVYLDILG (368 aa)) lie on the Cytoplasmic side of the membrane. Residues 469–494 (NDDDSASPLHHISNGSNTPSSSEGGP) are disordered. Polar residues predominate over residues 481-491 (SNGSNTPSSSE). Position 512 is a phosphotyrosine; by autocatalysis (Tyr512). The Protein kinase domain maps to 534-803 (IVLKRELGEG…LNIKEIHSLL (270 aa)). ATP is bound by residues 540–548 (LGEGAFGKV) and Lys568. The active-site Proton acceptor is the Asp672. Tyr698, Tyr702, Tyr703, and Tyr813 each carry phosphotyrosine; by autocatalysis.

Belongs to the protein kinase superfamily. Tyr protein kinase family. Insulin receptor subfamily. In terms of assembly, exists in a dynamic equilibrium between monomeric (low affinity) and dimeric (high affinity) structures. Interacts (phosphorylated upon activation by BDNF) with SHC1; mediates SHC1 phosphorylation and activation. Interacts (phosphorylated upon activation by BDNF) with PLCG1 and/or PLCG2; mediates PLCG1 phosphorylation and activation. Interacts with SH2B1 and SH2B2. Interacts with NGFR; may regulate the ligand specificity of the receptor. Interacts with SORCS2; this interaction is important for normal targeting to post-synaptic densities in response to high-frequency stimulation. Interacts (phosphorylated upon ligand-binding) with SH2D1A; regulates NTRK2. Interacts with SQSTM1 and KIDINS220. Interacts (phosphorylated upon ligand-binding) with FRS2; activates the MAPK signaling pathway. Interacts with APPL1. Interacts with MAPK8IP3/JIP3 and KLC1; interaction with KLC1 is mediated by MAPK8IP3/JIP3. In terms of processing, ligand-mediated auto-phosphorylation. In terms of tissue distribution, detected in embryonic brain and orsal root ganglia.

Its subcellular location is the cell membrane. It is found in the endosome membrane. The protein localises to the cell projection. It localises to the axon. The protein resides in the dendrite. Its subcellular location is the cytoplasm. It is found in the perinuclear region. The protein localises to the postsynaptic density. The catalysed reaction is L-tyrosyl-[protein] + ATP = O-phospho-L-tyrosyl-[protein] + ADP + H(+). With respect to regulation, the neuronal activity and the influx of calcium positively regulate the kinase activity and the internalization of the receptor which are both important for active signaling. Regulated by NGFR that may control the internalization of the receptor. NGFR may also stimulate the activation by BDNF compared to NTF3 and NTF4. The formation of active receptors dimers able to fully transduce the ligand-mediated signal, may be negatively regulated by the formation of inactive heterodimers with the non-catalytic isoforms. Receptor tyrosine kinase involved in the development and the maturation of the central and the peripheral nervous systems through regulation of neuron survival, proliferation, migration, differentiation, and synapse formation and plasticity. Receptor for BDNF/brain-derived neurotrophic factor and NTF4/neurotrophin-4. Alternatively can also bind NTF3/neurotrophin-3 which is less efficient in activating the receptor but regulates neuron survival through NTRK2. Upon ligand-binding, undergoes homodimerization, autophosphorylation and activation. Recruits, phosphorylates and/or activates several downstream effectors including SHC1, FRS2, SH2B1, SH2B2 and PLCG1 that regulate distinct overlapping signaling cascades. Through SHC1, FRS2, SH2B1, SH2B2 activates the GRB2-Ras-MAPK cascade that regulates for instance neuronal differentiation including neurite outgrowth. Through the same effectors controls the Ras-PI3 kinase-AKT1 signaling cascade that mainly regulates growth and survival. Through PLCG1 and the downstream protein kinase C-regulated pathways controls synaptic plasticity. Thereby, plays a role in learning and memory by regulating both short term synaptic function and long-term potentiation. PLCG1 also leads to NF-Kappa-B activation and the transcription of genes involved in cell survival. Hence, it is able to suppress anoikis, the apoptosis resulting from loss of cell-matrix interactions. May also play a role in neutrophin-dependent calcium signaling in glial cells and mediate communication between neurons and glia. This chain is BDNF/NT-3 growth factors receptor (NTRK2), found in Gallus gallus (Chicken).